The chain runs to 656 residues: Chaperone protein DnaK (656 aa).

Positions 590 to 605 (GGAAGGAAGGAAGGAA) are enriched in gly residues. The interval 590–656 (GGAAGGAAGG…DGQPKPGPAA (67 aa)) is disordered. The span at 606-621 (GDAAGAAGDSTGDAAG) shows a compositional bias: low complexity. Over residues 622-635 (AAGGPSEGPAGDAG) the composition is skewed to gly residues.

The protein belongs to the heat shock protein 70 family.

Functionally, acts as a chaperone. The protein is Chaperone protein DnaK of Cenarchaeum symbiosum (strain A).